Consider the following 101-residue polypeptide: MSSTLIVQLDMRTLCQEADVTADCVIEIVEHGIVEPSGRTPEDWLFDDQAPLLTRRAAKLHQELELEWEGVALALELLQEVQQLRSENSMLRQRLGRFTQM.

It belongs to the CbpM family.

Functionally, interacts with CbpA and inhibits both the DnaJ-like co-chaperone activity and the DNA binding activity of CbpA. Together with CbpA, modulates the activity of the DnaK chaperone system. Does not inhibit the co-chaperone activity of DnaJ. The polypeptide is Chaperone modulatory protein CbpM (Pseudomonas putida (strain GB-1)).